The sequence spans 231 residues: Endonuclease NucS (231 aa).

This sequence belongs to the NucS endonuclease family.

Its subcellular location is the cytoplasm. Cleaves both 3' and 5' ssDNA extremities of branched DNA structures. In Kocuria rhizophila (strain ATCC 9341 / DSM 348 / NBRC 103217 / DC2201), this protein is Endonuclease NucS.